Here is a 148-residue protein sequence, read N- to C-terminus: Putative pre-16S rRNA nuclease (148 aa).

This sequence belongs to the YqgF nuclease family.

The protein resides in the cytoplasm. In terms of biological role, could be a nuclease involved in processing of the 5'-end of pre-16S rRNA. The sequence is that of Putative pre-16S rRNA nuclease from Chlamydia trachomatis serovar L2 (strain ATCC VR-902B / DSM 19102 / 434/Bu).